The sequence spans 336 residues: Nitrilase (336 aa).

The region spanning 5 to 278 (LKVACVQAAP…EGLLYATLDP (274 aa)) is the CN hydrolase domain. Glu45 functions as the Proton acceptor in the catalytic mechanism. Lys127 (proton donor) is an active-site residue. Catalysis depends on Cys161, which acts as the Nucleophile.

This sequence belongs to the carbon-nitrogen hydrolase superfamily. Nitrilase family.

It catalyses the reaction a nitrile + 2 H2O = a carboxylate + NH4(+). It carries out the reaction (indol-3-yl)acetonitrile + 2 H2O = (indol-3-yl)acetate + NH4(+). The catalysed reaction is phenylpropanonitrile + 2 H2O = 3-phenylpropanoate + NH4(+). Its function is as follows. Arylacetonitrilase which is capable of hydrolyzing indole-3-acetonitrile (IAN) to the plant hormone indole-3-acetate (IAA), and allows the plant pathogenic bacterium to use IAN as a sole nitrogen source. Is also able to hydrolyze phenylpropionitrile (PPN), allowing the use of this compound as a sole nitrogen source. This enzyme may represent an additional mechanism for IAA biosynthesis or may be used to degrade and assimilate aldoximes and nitriles produced during host plant secondary metabolism. This Pseudomonas syringae pv. syringae (strain B728a) protein is Nitrilase.